We begin with the raw amino-acid sequence, 154 residues long: Myoglobin (154 aa).

One can recognise a Globin domain in the interval 2 to 148; the sequence is VLSEGEWQLV…FRKDIAAKYK (147 aa). Residue S4 is modified to Phosphoserine. Nitrite is bound at residue H65. Residue H65 coordinates O2. Position 68 is a phosphothreonine (T68). Heme b is bound at residue H94.

It belongs to the globin family. In terms of assembly, monomeric.

Its subcellular location is the cytoplasm. It is found in the sarcoplasm. The enzyme catalyses Fe(III)-heme b-[protein] + nitric oxide + H2O = Fe(II)-heme b-[protein] + nitrite + 2 H(+). The catalysed reaction is H2O2 + AH2 = A + 2 H2O. Functionally, monomeric heme protein which primary function is to store oxygen and facilitate its diffusion within muscle tissues. Reversibly binds oxygen through a pentacoordinated heme iron and enables its timely and efficient release as needed during periods of heightened demand. Depending on the oxidative conditions of tissues and cells, and in addition to its ability to bind oxygen, it also has a nitrite reductase activity whereby it regulates the production of bioactive nitric oxide. Under stress conditions, like hypoxia and anoxia, it also protects cells against reactive oxygen species thanks to its pseudoperoxidase activity. In Kogia breviceps (Pygmy sperm whale), this protein is Myoglobin (MB).